Here is a 330-residue protein sequence, read N- to C-terminus: Pseudouridine-5'-phosphate glycosidase (330 aa).

The active-site Proton donor is Glu-50. Positions 112 and 132 each coordinate substrate. Residue Asp-164 participates in Mn(2+) binding. A substrate-binding site is contributed by 166–168 (SSD). Residue Lys-185 is the Nucleophile of the active site.

Belongs to the pseudouridine-5'-phosphate glycosidase family. In terms of assembly, homotrimer. Mn(2+) is required as a cofactor.

Its subcellular location is the peroxisome. The enzyme catalyses D-ribose 5-phosphate + uracil = psi-UMP + H2O. Catalyzes the reversible cleavage of pseudouridine 5'-phosphate (PsiMP) to ribose 5-phosphate and uracil. Functions biologically in the cleavage direction, as part of a pseudouridine degradation pathway. Acts together with the pseudouridine kinase PUKI in the peroxisome to prevent toxic pseudouridine monophosphate accumulation. Can catalyze the formation of pseudouridine 5'-phosphate (reverse reaction) in vitro, with a catalytic efficiency 4 times lower than the hydrolysis reaction. The chain is Pseudouridine-5'-phosphate glycosidase from Arabidopsis thaliana (Mouse-ear cress).